Consider the following 881-residue polypeptide: Disks large homolog 2 (881 aa).

Disordered regions lie at residues histidine 16–alanine 41 and leucine 63–arginine 88. PDZ domains follow at residues glutamate 155–arginine 242, glutamate 250–threonine 337, and lysine 424–proline 505. The SH3 domain occupies lysine 539–glutamate 609. Residues alanine 683 to glutamate 866 enclose the Guanylate kinase-like domain. Positions glycine 709 to aspartate 729 are disordered.

This sequence belongs to the MAGUK family.

It localises to the cell membrane. It is found in the postsynaptic density. The protein resides in the synapse. Its subcellular location is the membrane. The protein localises to the cell projection. It localises to the axon. It is found in the perikaryon. May play a role in synapse assembly and function. The chain is Disks large homolog 2 (dlg2) from Danio rerio (Zebrafish).